A 267-amino-acid polypeptide reads, in one-letter code: 4-hydroxy-tetrahydrodipicolinate reductase (267 aa).

8 to 13 (GANGRM) is an NAD(+) binding site. Residue Arg-35 coordinates NADP(+). Residues 98 to 100 (GTT) and 122 to 125 (AANY) each bind NAD(+). His-155 serves as the catalytic Proton donor/acceptor. (S)-2,3,4,5-tetrahydrodipicolinate is bound at residue His-156. Lys-159 functions as the Proton donor in the catalytic mechanism. 165 to 166 (GT) contributes to the (S)-2,3,4,5-tetrahydrodipicolinate binding site.

Belongs to the DapB family.

It localises to the cytoplasm. It catalyses the reaction (S)-2,3,4,5-tetrahydrodipicolinate + NAD(+) + H2O = (2S,4S)-4-hydroxy-2,3,4,5-tetrahydrodipicolinate + NADH + H(+). The catalysed reaction is (S)-2,3,4,5-tetrahydrodipicolinate + NADP(+) + H2O = (2S,4S)-4-hydroxy-2,3,4,5-tetrahydrodipicolinate + NADPH + H(+). It functions in the pathway amino-acid biosynthesis; L-lysine biosynthesis via DAP pathway; (S)-tetrahydrodipicolinate from L-aspartate: step 4/4. Functionally, catalyzes the conversion of 4-hydroxy-tetrahydrodipicolinate (HTPA) to tetrahydrodipicolinate. This is 4-hydroxy-tetrahydrodipicolinate reductase from Pseudoalteromonas atlantica (strain T6c / ATCC BAA-1087).